Reading from the N-terminus, the 442-residue chain is Glycolipid 2-alpha-mannosyltransferase (442 aa).

Residues 1-11 (MALFLSKRLLR) lie on the Cytoplasmic side of the membrane. The chain crosses the membrane as a helical; Signal-anchor for type II membrane protein span at residues 12–30 (FTVIAGAVIVLLLTLNSNS). The tract at residues 31–118 (RTQQYIPSSI…YITPSFANKA (88 aa)) is stem region. Residues 31-442 (RTQQYIPSSI…KPKNWKKFRE (412 aa)) lie on the Lumenal side of the membrane. The disordered stretch occupies residues 68–95 (EQSALNSEASEDSEAMDEESKALKAAAE). Over residues 85 to 95 (EESKALKAAAE) the composition is skewed to basic and acidic residues. Residues 119 to 442 (GKPKACYVTL…KPKNWKKFRE (324 aa)) are catalytic. The N-linked (GlcNAc...) asparagine glycan is linked to Asn-197. The active-site Nucleophile is Glu-329.

Belongs to the glycosyltransferase 15 family. Mn(2+) serves as cofactor.

Its subcellular location is the golgi apparatus membrane. The protein operates within protein modification; protein glycosylation. Functionally, mannosyltransferase that transfers an alpha-D-mannosyl residue from GDP-mannose into lipid-linked oligosaccharide, forming an alpha-(1-&gt;2)-D-mannosyl-D-mannose linkage. Required for the attachment of the third mannose residue of O-linked saccharides. In Saccharomyces cerevisiae (strain ATCC 204508 / S288c) (Baker's yeast), this protein is Glycolipid 2-alpha-mannosyltransferase (KRE2).